Here is a 74-residue protein sequence, read N- to C-terminus: Acyclotide phyb-K (74 aa).

The signal sequence occupies residues 1-24 (MARVNSLKCALCFIVLILFVQLNC). Residues 25 to 43 (IPETRVMAVELSRVFLQTS) constitute a propeptide that is removed on maturation. Disulfide bonds link Cys-47-Cys-64, Cys-51-Cys-66, and Cys-56-Cys-71.

Post-translationally, contains 3 disulfide bonds. As to expression, expressed in midvein, lamina and periphery of leaves (at protein level).

Probably participates in a plant defense mechanism. This Petunia hybrida (Petunia) protein is Acyclotide phyb-K.